Reading from the N-terminus, the 232-residue chain is Putative ABC transporter ATP-binding protein VNG_2317G (232 aa).

Residues 2–231 (LSVRNLVHRY…GALPDAGVRP (230 aa)) enclose the ABC transporter domain. ATP is bound at residue 34–41 (GANGSGKT).

The protein belongs to the ABC transporter superfamily.

It localises to the cell membrane. Probably part of an ABC transporter complex. Responsible for energy coupling to the transport system. The chain is Putative ABC transporter ATP-binding protein VNG_2317G from Halobacterium salinarum (strain ATCC 700922 / JCM 11081 / NRC-1) (Halobacterium halobium).